Here is a 340-residue protein sequence, read N- to C-terminus: tRNA N6-adenosine threonylcarbamoyltransferase (340 aa).

2 residues coordinate Fe cation: His-111 and His-115. Substrate is bound by residues Val-133–Gly-137, Asp-166, Gly-179, Asp-183, and Asn-273. Asp-301 serves as a coordination point for Fe cation.

This sequence belongs to the KAE1 / TsaD family. Fe(2+) serves as cofactor.

It is found in the cytoplasm. The catalysed reaction is L-threonylcarbamoyladenylate + adenosine(37) in tRNA = N(6)-L-threonylcarbamoyladenosine(37) in tRNA + AMP + H(+). Required for the formation of a threonylcarbamoyl group on adenosine at position 37 (t(6)A37) in tRNAs that read codons beginning with adenine. Is involved in the transfer of the threonylcarbamoyl moiety of threonylcarbamoyl-AMP (TC-AMP) to the N6 group of A37, together with TsaE and TsaB. TsaD likely plays a direct catalytic role in this reaction. This chain is tRNA N6-adenosine threonylcarbamoyltransferase, found in Pelobacter propionicus (strain DSM 2379 / NBRC 103807 / OttBd1).